Reading from the N-terminus, the 100-residue chain is Aspartyl/glutamyl-tRNA(Asn/Gln) amidotransferase subunit C (100 aa).

This sequence belongs to the GatC family. Heterotrimer of A, B and C subunits.

The catalysed reaction is L-glutamyl-tRNA(Gln) + L-glutamine + ATP + H2O = L-glutaminyl-tRNA(Gln) + L-glutamate + ADP + phosphate + H(+). The enzyme catalyses L-aspartyl-tRNA(Asn) + L-glutamine + ATP + H2O = L-asparaginyl-tRNA(Asn) + L-glutamate + ADP + phosphate + 2 H(+). Allows the formation of correctly charged Asn-tRNA(Asn) or Gln-tRNA(Gln) through the transamidation of misacylated Asp-tRNA(Asn) or Glu-tRNA(Gln) in organisms which lack either or both of asparaginyl-tRNA or glutaminyl-tRNA synthetases. The reaction takes place in the presence of glutamine and ATP through an activated phospho-Asp-tRNA(Asn) or phospho-Glu-tRNA(Gln). The chain is Aspartyl/glutamyl-tRNA(Asn/Gln) amidotransferase subunit C from Streptococcus gordonii (strain Challis / ATCC 35105 / BCRC 15272 / CH1 / DL1 / V288).